A 229-amino-acid polypeptide reads, in one-letter code: Ribonuclease T (229 aa).

Residues 23-197 (VIIDVETAGF…YDTERTAKLF (175 aa)) form the Exonuclease domain. 4 residues coordinate Mg(2+): aspartate 26, glutamate 28, histidine 184, and aspartate 189. Histidine 184 acts as the Proton donor/acceptor in catalysis.

It belongs to the RNase T family. In terms of assembly, homodimer. Requires Mg(2+) as cofactor.

Its function is as follows. Trims short 3' overhangs of a variety of RNA species, leaving a one or two nucleotide 3' overhang. Responsible for the end-turnover of tRNA: specifically removes the terminal AMP residue from uncharged tRNA (tRNA-C-C-A). Also appears to be involved in tRNA biosynthesis. In Haemophilus influenzae (strain 86-028NP), this protein is Ribonuclease T.